Reading from the N-terminus, the 1368-residue chain is DNA-directed RNA polymerase subunit beta (1368 aa).

Belongs to the RNA polymerase beta chain family. In terms of assembly, the RNAP catalytic core consists of 2 alpha, 1 beta, 1 beta' and 1 omega subunit. When a sigma factor is associated with the core the holoenzyme is formed, which can initiate transcription.

It carries out the reaction RNA(n) + a ribonucleoside 5'-triphosphate = RNA(n+1) + diphosphate. Functionally, DNA-dependent RNA polymerase catalyzes the transcription of DNA into RNA using the four ribonucleoside triphosphates as substrates. This chain is DNA-directed RNA polymerase subunit beta, found in Desulfosudis oleivorans (strain DSM 6200 / JCM 39069 / Hxd3) (Desulfococcus oleovorans).